A 184-amino-acid polypeptide reads, in one-letter code: Type-1 fimbrial protein, A chain (184 aa).

Positions methionine 1 to alanine 22 are cleaved as a signal peptide. A disulfide bridge links cysteine 46 with cysteine 86.

It belongs to the fimbrial protein family.

Its subcellular location is the fimbrium. Its function is as follows. Fimbriae (also called pili), polar filaments radiating from the surface of the bacterium to a length of 0.5-1.5 micrometers and numbering 100-300 per cell, enable bacteria to colonize the epithelium of specific host organs. The polypeptide is Type-1 fimbrial protein, A chain (fimA) (Salmonella typhi).